The sequence spans 313 residues: Porphobilinogen deaminase (313 aa).

At cysteine 242 the chain carries S-(dipyrrolylmethanemethyl)cysteine.

This sequence belongs to the HMBS family. As to quaternary structure, monomer. Requires dipyrromethane as cofactor.

The catalysed reaction is 4 porphobilinogen + H2O = hydroxymethylbilane + 4 NH4(+). It functions in the pathway porphyrin-containing compound metabolism; protoporphyrin-IX biosynthesis; coproporphyrinogen-III from 5-aminolevulinate: step 2/4. Its function is as follows. Tetrapolymerization of the monopyrrole PBG into the hydroxymethylbilane pre-uroporphyrinogen in several discrete steps. This Pseudomonas syringae pv. tomato (strain ATCC BAA-871 / DC3000) protein is Porphobilinogen deaminase.